Consider the following 460-residue polypeptide: Serine hydroxymethyltransferase, cytosolic (460 aa).

Residue Lys244 is modified to N6-(pyridoxal phosphate)lysine.

The protein belongs to the SHMT family. As to quaternary structure, homotetramer. It depends on pyridoxal 5'-phosphate as a cofactor.

It is found in the cytoplasm. The enzyme catalyses (6R)-5,10-methylene-5,6,7,8-tetrahydrofolate + glycine + H2O = (6S)-5,6,7,8-tetrahydrofolate + L-serine. The protein operates within one-carbon metabolism; tetrahydrofolate interconversion. Interconversion of serine and glycine. The protein is Serine hydroxymethyltransferase, cytosolic (SHMT-1) of Encephalitozoon cuniculi (strain GB-M1) (Microsporidian parasite).